The chain runs to 392 residues: Formate-dependent phosphoribosylglycinamide formyltransferase (392 aa).

Residues 22 to 23 and Glu-82 contribute to the N(1)-(5-phospho-beta-D-ribosyl)glycinamide site; that span reads EL. ATP is bound by residues Arg-114, Lys-155, 160-165, 195-198, and Glu-203; these read SSGKGQ and EGVV. Residues 119–308 form the ATP-grasp domain; the sequence is RLAAEELGLP…EFALHVRAFL (190 aa). Mg(2+) contacts are provided by Glu-267 and Glu-279. N(1)-(5-phospho-beta-D-ribosyl)glycinamide is bound by residues Asp-286, Lys-355, and 362 to 363; that span reads RR.

Belongs to the PurK/PurT family. As to quaternary structure, homodimer.

It carries out the reaction N(1)-(5-phospho-beta-D-ribosyl)glycinamide + formate + ATP = N(2)-formyl-N(1)-(5-phospho-beta-D-ribosyl)glycinamide + ADP + phosphate + H(+). It functions in the pathway purine metabolism; IMP biosynthesis via de novo pathway; N(2)-formyl-N(1)-(5-phospho-D-ribosyl)glycinamide from N(1)-(5-phospho-D-ribosyl)glycinamide (formate route): step 1/1. In terms of biological role, involved in the de novo purine biosynthesis. Catalyzes the transfer of formate to 5-phospho-ribosyl-glycinamide (GAR), producing 5-phospho-ribosyl-N-formylglycinamide (FGAR). Formate is provided by PurU via hydrolysis of 10-formyl-tetrahydrofolate. This Cronobacter sakazakii (strain ATCC BAA-894) (Enterobacter sakazakii) protein is Formate-dependent phosphoribosylglycinamide formyltransferase.